Reading from the N-terminus, the 185-residue chain is Large ribosomal subunit protein uL5 (185 aa).

Belongs to the universal ribosomal protein uL5 family. Part of the 50S ribosomal subunit; part of the 5S rRNA/L5/L18/L25 subcomplex. Contacts the 5S rRNA and the P site tRNA. Forms a bridge to the 30S subunit in the 70S ribosome.

Functionally, this is one of the proteins that bind and probably mediate the attachment of the 5S RNA into the large ribosomal subunit, where it forms part of the central protuberance. In the 70S ribosome it contacts protein S13 of the 30S subunit (bridge B1b), connecting the 2 subunits; this bridge is implicated in subunit movement. Contacts the P site tRNA; the 5S rRNA and some of its associated proteins might help stabilize positioning of ribosome-bound tRNAs. This Nitrobacter winogradskyi (strain ATCC 25391 / DSM 10237 / CIP 104748 / NCIMB 11846 / Nb-255) protein is Large ribosomal subunit protein uL5.